The following is an 82-amino-acid chain: Large ribosomal subunit protein bL28 (82 aa).

Residues 1-25 (MAKVDQITKKRAMTGNTRSHALNHS) are disordered.

The protein belongs to the bacterial ribosomal protein bL28 family.

This Malacoplasma penetrans (strain HF-2) (Mycoplasma penetrans) protein is Large ribosomal subunit protein bL28.